A 278-amino-acid chain; its full sequence is Thiazole synthase (278 aa).

Lysine 107 functions as the Schiff-base intermediate with DXP in the catalytic mechanism. 1-deoxy-D-xylulose 5-phosphate-binding positions include glycine 168, 194-195, and 216-217; these read AG and AS.

Belongs to the ThiG family. In terms of assembly, homotetramer. Forms heterodimers with either ThiH or ThiS.

It is found in the cytoplasm. It carries out the reaction [ThiS sulfur-carrier protein]-C-terminal-Gly-aminoethanethioate + 2-iminoacetate + 1-deoxy-D-xylulose 5-phosphate = [ThiS sulfur-carrier protein]-C-terminal Gly-Gly + 2-[(2R,5Z)-2-carboxy-4-methylthiazol-5(2H)-ylidene]ethyl phosphate + 2 H2O + H(+). It functions in the pathway cofactor biosynthesis; thiamine diphosphate biosynthesis. Catalyzes the rearrangement of 1-deoxy-D-xylulose 5-phosphate (DXP) to produce the thiazole phosphate moiety of thiamine. Sulfur is provided by the thiocarboxylate moiety of the carrier protein ThiS. In vitro, sulfur can be provided by H(2)S. The protein is Thiazole synthase of Corynebacterium jeikeium (strain K411).